The sequence spans 363 residues: 3-dehydroquinate synthase (363 aa).

Residues 109 to 113 (GATTD), 133 to 134 (TT), lysine 146, and lysine 155 each bind NAD(+). Residues glutamate 188, histidine 251, and histidine 267 each coordinate Zn(2+).

It belongs to the sugar phosphate cyclases superfamily. Dehydroquinate synthase family. It depends on NAD(+) as a cofactor. Requires Co(2+) as cofactor. The cofactor is Zn(2+).

Its subcellular location is the cytoplasm. The enzyme catalyses 7-phospho-2-dehydro-3-deoxy-D-arabino-heptonate = 3-dehydroquinate + phosphate. It participates in metabolic intermediate biosynthesis; chorismate biosynthesis; chorismate from D-erythrose 4-phosphate and phosphoenolpyruvate: step 2/7. Functionally, catalyzes the conversion of 3-deoxy-D-arabino-heptulosonate 7-phosphate (DAHP) to dehydroquinate (DHQ). The sequence is that of 3-dehydroquinate synthase from Streptomyces avermitilis (strain ATCC 31267 / DSM 46492 / JCM 5070 / NBRC 14893 / NCIMB 12804 / NRRL 8165 / MA-4680).